Reading from the N-terminus, the 687-residue chain is Ferric vulnibactin receptor VuuA (687 aa).

A signal peptide spans 1-37; it reads MAALRPARTSVAEKKTFKLHALSAVVMGLCASGQAYA. A TBDR plug domain is found at 63–185; the sequence is TIYDTSSSVQ…SAGAIVMKTN (123 aa). The region spanning 190 to 687 is the TBDR beta-barrel domain; the sequence is HFESAVKAGV…MIGASLQLNF (498 aa). The TonB C-terminal box motif lies at 670 to 687; sequence EPLKQQPRMIGASLQLNF.

It belongs to the TonB-dependent receptor family.

The protein localises to the cell outer membrane. In terms of biological role, involved in the uptake of iron in complex with vulnibactin, a catecholate siderophore synthesized by V.vulnificus. Binds and transports ferric vulnibactin across the outer membrane. The energy source is provided by the inner membrane TonB system. In Vibrio vulnificus, this protein is Ferric vulnibactin receptor VuuA.